The sequence spans 22 residues: Superoxide dismutase [Cu-Zn] 2 (22 aa).

Belongs to the Cu-Zn superoxide dismutase family. Homodimer. It depends on Cu cation as a cofactor. Zn(2+) serves as cofactor. As to expression, dominant isozyme in roots.

The protein resides in the cytoplasm. The enzyme catalyses 2 superoxide + 2 H(+) = H2O2 + O2. Its function is as follows. Destroys radicals which are normally produced within the cells and which are toxic to biological systems. The sequence is that of Superoxide dismutase [Cu-Zn] 2 from Picea abies (Norway spruce).